A 232-amino-acid polypeptide reads, in one-letter code: Orotidine 5'-phosphate decarboxylase (232 aa).

Substrate-binding positions include D11, K32, 59-68 (DLKFHDIPNT), T118, R180, Q189, G209, and R210. Residue K61 is the Proton donor of the active site.

Belongs to the OMP decarboxylase family. Type 1 subfamily. In terms of assembly, homodimer.

It carries out the reaction orotidine 5'-phosphate + H(+) = UMP + CO2. The protein operates within pyrimidine metabolism; UMP biosynthesis via de novo pathway; UMP from orotate: step 2/2. Its function is as follows. Catalyzes the decarboxylation of orotidine 5'-monophosphate (OMP) to uridine 5'-monophosphate (UMP). The chain is Orotidine 5'-phosphate decarboxylase from Gloeothece citriformis (strain PCC 7424) (Cyanothece sp. (strain PCC 7424)).